The primary structure comprises 67 residues: Large ribosomal subunit protein bL35 (67 aa).

Residues Met-1–Val-16 show a composition bias toward basic residues. The interval Met-1–Val-22 is disordered.

Belongs to the bacterial ribosomal protein bL35 family.

In Methylibium petroleiphilum (strain ATCC BAA-1232 / LMG 22953 / PM1), this protein is Large ribosomal subunit protein bL35.